The primary structure comprises 119 residues: MAFTPKIITCLIVLTIYMASPTESTIQCGTVTSTLAQCLTYLTNSGPLPSQCCVGVKSLYQLAQTTPDRKQVCECLKLAGKEIKGLNTDLVAALPTTCGVSIPYPISFSTNCDSISTAV.

An N-terminal signal peptide occupies residues 1 to 24; sequence MAFTPKIITCLIVLTIYMASPTES. Disulfide bonds link Cys-28/Cys-75, Cys-38/Cys-52, Cys-53/Cys-98, and Cys-73/Cys-112.

The protein belongs to the plant LTP family.

In terms of biological role, plant non-specific lipid-transfer proteins transfer phospholipids as well as galactolipids across membranes. May play a role in wax or cutin deposition in the cell walls of expanding epidermal cells and certain secretory tissues. This chain is Non-specific lipid-transfer protein 12 (LTP12), found in Arabidopsis thaliana (Mouse-ear cress).